The sequence spans 165 residues: SsrA-binding protein (165 aa).

A compositionally biased stretch (basic and acidic residues) spans 135–158 (QAHDKRQDMARRDAQREVTRELGR). The tract at residues 135 to 165 (QAHDKRQDMARRDAQREVTRELGRRVKGMTN) is disordered.

The protein belongs to the SmpB family.

It localises to the cytoplasm. Required for rescue of stalled ribosomes mediated by trans-translation. Binds to transfer-messenger RNA (tmRNA), required for stable association of tmRNA with ribosomes. tmRNA and SmpB together mimic tRNA shape, replacing the anticodon stem-loop with SmpB. tmRNA is encoded by the ssrA gene; the 2 termini fold to resemble tRNA(Ala) and it encodes a 'tag peptide', a short internal open reading frame. During trans-translation Ala-aminoacylated tmRNA acts like a tRNA, entering the A-site of stalled ribosomes, displacing the stalled mRNA. The ribosome then switches to translate the ORF on the tmRNA; the nascent peptide is terminated with the 'tag peptide' encoded by the tmRNA and targeted for degradation. The ribosome is freed to recommence translation, which seems to be the essential function of trans-translation. In Mycolicibacterium gilvum (strain PYR-GCK) (Mycobacterium gilvum (strain PYR-GCK)), this protein is SsrA-binding protein.